We begin with the raw amino-acid sequence, 380 residues long: Putative 8-amino-7-oxononanoate synthase (380 aa).

Position 18 (arginine 18) interacts with substrate. 106-107 (GY) is a pyridoxal 5'-phosphate binding site. Substrate is bound at residue histidine 131. Pyridoxal 5'-phosphate is bound by residues serine 179, 205–208 (DEAH), and 236–239 (TFGK). The residue at position 239 (lysine 239) is an N6-(pyridoxal phosphate)lysine. Substrate is bound at residue threonine 352.

The protein belongs to the class-II pyridoxal-phosphate-dependent aminotransferase family. BioF subfamily. Homodimer. The cofactor is pyridoxal 5'-phosphate.

It carries out the reaction 6-carboxyhexanoyl-[ACP] + L-alanine + H(+) = (8S)-8-amino-7-oxononanoate + holo-[ACP] + CO2. Its pathway is cofactor biosynthesis; biotin biosynthesis. Its function is as follows. Catalyzes the decarboxylative condensation of pimeloyl-[acyl-carrier protein] and L-alanine to produce 8-amino-7-oxononanoate (AON), [acyl-carrier protein], and carbon dioxide. This is Putative 8-amino-7-oxononanoate synthase (bioF) from Neisseria meningitidis serogroup B (strain ATCC BAA-335 / MC58).